Reading from the N-terminus, the 86-residue chain is uncharacterized protein (86 aa).

The helical transmembrane segment at 12–32 (IIFIFAIIIIVVLCVITYLYL) threads the bilayer.

It localises to the membrane. This is an uncharacterized protein from Escherichia coli (strain K12).